A 1699-amino-acid polypeptide reads, in one-letter code: Cilia- and flagella-associated protein 61 (1699 aa).

Over residues methionine 1 to glutamine 22 the composition is skewed to polar residues. Disordered stretches follow at residues methionine 1 to serine 23, glutamine 489 to lysine 515, and glutamate 1340 to glutamine 1365. Basic residues predominate over residues glutamine 489–arginine 503. Composition is skewed to basic and acidic residues over residues glutamine 504–lysine 515 and glutamate 1340–aspartate 1359.

It localises to the cell projection. The protein resides in the cilium. Its function is as follows. As component of a spoke-associated complex, regulates ciliary mobility by mediating a stable and functional assembly of the radial spoke 3 (RS3). The sequence is that of Cilia- and flagella-associated protein 61 from Tetrahymena thermophila (strain SB210).